The following is a 62-amino-acid chain: MARKCYVTGKSPKSGNNRSHALNKTKRTWGINVQKVRILVDGKPKKVWVSARALKSGKVERV.

The tract at residues 1-26 (MARKCYVTGKSPKSGNNRSHALNKTK) is disordered. The span at 11–20 (SPKSGNNRSH) shows a compositional bias: polar residues.

The protein belongs to the bacterial ribosomal protein bL28 family.

The protein is Large ribosomal subunit protein bL28 of Exiguobacterium sibiricum (strain DSM 17290 / CCUG 55495 / CIP 109462 / JCM 13490 / 255-15).